The primary structure comprises 543 residues: Adenosine deaminase 2 (543 aa).

The N-terminal stretch at 1-26 is a signal peptide; sequence MFLKFKNIFFIVLTLSIVFNGLIVNS. Over residues 31 to 54 the composition is skewed to low complexity; the sequence is INNKNNNNNNNNKDLSSSESGSSS. The tract at residues 31–58 is disordered; it reads INNKNNNNNNNNKDLSSSESGSSSDINP. Residue asparagine 126 is glycosylated (N-linked (GlcNAc...) asparagine). 2 residues coordinate Zn(2+): histidine 144 and histidine 146. The N-linked (GlcNAc...) asparagine glycan is linked to asparagine 179. Position 232 to 239 (232 to 239) interacts with substrate; it reads WRKFDGIF. N-linked (GlcNAc...) asparagine glycosylation is found at asparagine 309 and asparagine 326. Residue glycine 355 participates in substrate binding. Histidine 389 contacts Zn(2+). Glutamate 392 functions as the Proton donor in the catalytic mechanism. The N-linked (GlcNAc...) asparagine glycan is linked to asparagine 397. Histidine 414 functions as the Proton acceptor in the catalytic mechanism. Aspartate 471 lines the Zn(2+) pocket. Residue aspartate 472 participates in substrate binding. Residues asparagine 508 and asparagine 514 are each glycosylated (N-linked (GlcNAc...) asparagine).

It belongs to the metallo-dependent hydrolases superfamily. Adenosine and AMP deaminases family. ADGF subfamily. The cofactor is Zn(2+).

It is found in the secreted. The catalysed reaction is adenosine + H2O + H(+) = inosine + NH4(+). In terms of biological role, adenosine deaminase that may contribute to the degradation of extracellular adenosine, a signaling molecule that controls a variety of cellular responses. May play a role in the regulation of cell proliferation. The sequence is that of Adenosine deaminase 2 from Dictyostelium discoideum (Social amoeba).